Here is a 348-residue protein sequence, read N- to C-terminus: Probable malate dehydrogenase 2, mitochondrial (348 aa).

The N-terminal 9 residues, 1-9 (MNKILTRSF), are a transit peptide targeting the mitochondrion. 31–37 (GASGQIG) serves as a coordination point for NAD(+). Substrate is bound by residues Arg112 and Arg118. Residues Asn125, Gln132, and 150–152 (VGN) contribute to the NAD(+) site. Substrate is bound by residues Asn152 and Arg183. The Proton acceptor role is filled by His208.

It belongs to the LDH/MDH superfamily. MDH type 2 family. As to quaternary structure, homodimer.

It localises to the mitochondrion. It carries out the reaction (S)-malate + NAD(+) = oxaloacetate + NADH + H(+). Functionally, catalyzes the reversible oxidation of malate to oxaloacetate. The protein is Probable malate dehydrogenase 2, mitochondrial (mdhB) of Dictyostelium discoideum (Social amoeba).